The primary structure comprises 859 residues: DNA mismatch repair protein MutS (859 aa).

622-629 (GPNMGGKS) is a binding site for ATP.

This sequence belongs to the DNA mismatch repair MutS family.

Functionally, this protein is involved in the repair of mismatches in DNA. It is possible that it carries out the mismatch recognition step. This protein has a weak ATPase activity. The protein is DNA mismatch repair protein MutS of Coxiella burnetii (strain Dugway 5J108-111).